The following is a 221-amino-acid chain: Endonuclease V (221 aa).

Asp44 and Asp112 together coordinate Mg(2+).

Belongs to the endonuclease V family. Mg(2+) serves as cofactor.

Its subcellular location is the cytoplasm. The catalysed reaction is Endonucleolytic cleavage at apurinic or apyrimidinic sites to products with a 5'-phosphate.. Functionally, DNA repair enzyme involved in the repair of deaminated bases. Selectively cleaves double-stranded DNA at the second phosphodiester bond 3' to a deoxyinosine leaving behind the intact lesion on the nicked DNA. This is Endonuclease V from Nostoc punctiforme (strain ATCC 29133 / PCC 73102).